The primary structure comprises 1067 residues: Glycine--tRNA ligase, chloroplastic/mitochondrial 2 (1067 aa).

Residues 1-50 (MAILHFSLPLIVSFLRPHASPRFFLLPRSLSQSPFLSRRRFHRTSAVSSA) constitute a chloroplast and mitochondrion transit peptide. Glutamate 513 is a substrate binding site. ATP is bound by residues 589 to 596 (RNSGINIE), 619 to 624 (LVVPQN), 744 to 745 (RL), and 859 to 862 (GLRR). 624–628 (NLLNE) is a binding site for substrate. 855–859 (NDPFG) provides a ligand contact to substrate.

This sequence belongs to the class-II aminoacyl-tRNA synthetase family. In terms of assembly, homodimer.

The protein resides in the plastid. It is found in the chloroplast. Its subcellular location is the mitochondrion. The catalysed reaction is tRNA(Gly) + glycine + ATP = glycyl-tRNA(Gly) + AMP + diphosphate. Its function is as follows. Catalyzes the attachment of glycine to tRNA(Gly). Is also able produce diadenosine tetraphosphate (Ap4A), a universal pleiotropic signaling molecule needed for cell regulation pathways, by direct condensation of 2 ATPs. The polypeptide is Glycine--tRNA ligase, chloroplastic/mitochondrial 2 (Arabidopsis thaliana (Mouse-ear cress)).